We begin with the raw amino-acid sequence, 356 residues long: Protein ATP1B4 (356 aa).

Topologically, residues 1–109 (MRRQLRSRRA…SLARTGQSRS (109 aa)) are nuclear. The disordered stretch occupies residues 32–77 (LADEEEEAEEEAQVMMVPGLEEEEEEEEGKEEEEEREEEEGQGQST). 2 stretches are compositionally biased toward acidic residues: residues 33–43 (ADEEEEAEEEA) and 51–72 (LEEE…EEEG). The chain crosses the membrane as a helical; Signal-anchor for type II membrane protein span at residues 110–130 (LILVIYFFFYASLAAVITLFI). At 131-356 (YMLFLAISPY…RIIFTLNIET (226 aa)) the chain is on the perinuclear space side.

This sequence belongs to the X(+)/potassium ATPases subunit beta family. As to quaternary structure, does not associate with known Na,K-ATPase alpha-subunits. Associates with a SMAD7-transcriptional complex. Interacts with SNW1 and TOR1AIP1. As to expression, expressed in perinatal myocytes (at protein level). Expressed during postnatal development in skeletal muscle and heart.

Its subcellular location is the nucleus inner membrane. Its function is as follows. May act as a transcriptional coregulator during muscle development through its interaction with SNW1. Has lost its ancestral function as a Na,K-ATPase beta-subunit. This chain is Protein ATP1B4 (Atp1b4), found in Rattus norvegicus (Rat).